The following is a 151-amino-acid chain: Small ribosomal subunit protein uS15 (151 aa).

It belongs to the universal ribosomal protein uS15 family.

This Ciona intestinalis (Transparent sea squirt) protein is Small ribosomal subunit protein uS15 (RPS13).